Reading from the N-terminus, the 429-residue chain is Hemoglobinase (429 aa).

The first 19 residues, 1 to 19 (MMLFSLFLISILHILLVKC), serve as a signal peptide directing secretion. Positions 20-31 (QLDTNYEVSDET) are excised as a propeptide. Residue His-151 is part of the active site. The segment at 288–309 (FQGSRDKSSSENDEPPMKPRHS) is disordered. Residues 292–429 (RDKSSSENDE…INEAIIKICG (138 aa)) constitute a propeptide that is removed on maturation.

It belongs to the peptidase C13 family.

It carries out the reaction Hydrolysis of proteins and small molecule substrates at -Asn-|-Xaa- bonds.. In terms of biological role, this protease is used by the parasite for degradation of the host globin. The polypeptide is Hemoglobinase (Schistosoma mansoni (Blood fluke)).